Here is a 477-residue protein sequence, read N- to C-terminus: Proline--tRNA ligase (477 aa).

Belongs to the class-II aminoacyl-tRNA synthetase family. ProS type 3 subfamily. In terms of assembly, homodimer.

It is found in the cytoplasm. The catalysed reaction is tRNA(Pro) + L-proline + ATP = L-prolyl-tRNA(Pro) + AMP + diphosphate. Its function is as follows. Catalyzes the attachment of proline to tRNA(Pro) in a two-step reaction: proline is first activated by ATP to form Pro-AMP and then transferred to the acceptor end of tRNA(Pro). The sequence is that of Proline--tRNA ligase from Methanocorpusculum labreanum (strain ATCC 43576 / DSM 4855 / Z).